The sequence spans 303 residues: Protoheme IX farnesyltransferase 2 (303 aa).

A run of 9 helical transmembrane segments spans residues 29–49, 51–71, 96–118, 123–143, 150–170, 177–197, 223–243, 244–264, and 281–301; these read VVAL…PGIV, LQPL…AAAF, ISTT…VLYT, LTAW…TAYL, NIVI…TAIT, ALLL…ALAI, CILL…LVGM, CGPI…YKAW, and FSIY…YFWV.

This sequence belongs to the UbiA prenyltransferase family. Protoheme IX farnesyltransferase subfamily.

It is found in the cell inner membrane. It carries out the reaction heme b + (2E,6E)-farnesyl diphosphate + H2O = Fe(II)-heme o + diphosphate. It functions in the pathway porphyrin-containing compound metabolism; heme O biosynthesis; heme O from protoheme: step 1/1. Converts heme B (protoheme IX) to heme O by substitution of the vinyl group on carbon 2 of heme B porphyrin ring with a hydroxyethyl farnesyl side group. The chain is Protoheme IX farnesyltransferase 2 from Shewanella frigidimarina (strain NCIMB 400).